The following is a 112-amino-acid chain: Colipase (112 aa).

Residues 1–17 (MEKVLILLLVALAVAYA) form the signal peptide. Residues 18–22 (VPDPR) constitute a propeptide, enterostatin, activation peptide. Intrachain disulfides connect C34/C45, C40/C56, C44/C78, C66/C86, and C80/C104.

It belongs to the colipase family. As to quaternary structure, forms a 1:1 stoichiometric complex with pancreatic lipase.

It is found in the secreted. Its function is as follows. Colipase is a cofactor of pancreatic lipase. It allows the lipase to anchor itself to the lipid-water interface. Without colipase the enzyme is washed off by bile salts, which have an inhibitory effect on the lipase. Enterostatin has a biological activity as a satiety signal. This is Colipase (CLPS) from Bos taurus (Bovine).